The following is a 270-amino-acid chain: MTDNLPLRGKVALVTGAARGIGRAYALRLAKRGADVAVVDFDLHSYKDYQLEAASMRGDTVVDEIREIGMRALGFQADVTDATTLNEAVQQIVGEWGRLDIAICNAGGGVGSPEETRASIVEKDLVDVVVARNLTGTIHTCQAVAVPMKEQRSGKIVTVGSQAGHRIEDNGGYAHYGAAKAAVAKYTQYLARDLGPFGVTVNCVAPGYISTGRLAPILSAMGDAQLLDDVPLGRYGTPEDCAGVIEFLSSDLSDYVTGAIIPVDGGLTYS.

NAD(+)-binding residues include Arg19, Asp40, Asp78, Val79, Asn105, Tyr176, Lys180, Ile209, and Thr211. The Proton acceptor role is filled by Tyr176.

Belongs to the short-chain dehydrogenases/reductases (SDR) family. Homodimer.

Its subcellular location is the cytoplasm. The enzyme catalyses cyclohexanol + NAD(+) = cyclohexanone + NADH + H(+). With respect to regulation, activity is enhanced by the addition of Ba(2+) and Mg(2+), but inhibited by the addition of Al(3+), Ca(2+), Co(2+), Cu(2+), Mn(2+) and Zn(2+). Catalyzes the oxidation of cyclohexanol to cyclohexanone. Can also use a broad range of other alcohols, including trans-cyclohexane-1,2-diol, trans-cyclopentane-1,2-diol, cyclopentanol, hexane-1,2-diol, ethanol, 1-propanol, 1-butanol, 1-pentanol and 1-hexanol. The polypeptide is Cyclohexanol dehydrogenase (Rhodococcus sp. (strain TK6)).